The following is an 814-amino-acid chain: Microbial collagenase (814 aa).

Residues 1 to 21 (MELKILSVAIATTLTSTGVFA) form the signal peptide. The propeptide occupies 22 to 75 (LSEPVSQVTEQHAHSAHTHGVEFNRVEYQPTATLPIQPSKATRVQSLESLDESS). Histidine 477 provides a ligand contact to Zn(2+). Residue glutamate 478 is part of the active site. Histidine 481 contributes to the Zn(2+) binding site. Residues 609-697 (APNAVITANS…VVISALGGND (89 aa)) enclose the PKD domain.

Belongs to the peptidase M9A family. Requires Zn(2+) as cofactor. Proteolytic cleavage might yield three different active forms.

It is found in the secreted. It catalyses the reaction Digestion of native collagen in the triple helical region at Xaa-|-Gly bonds. With synthetic peptides, a preference is shown for Gly at P3 and P1', Pro and Ala at P2 and P2', and hydroxyproline, Ala or Arg at P3'.. This Vibrio alginolyticus protein is Microbial collagenase.